We begin with the raw amino-acid sequence, 445 residues long: T-box transcription factor TBX19 (445 aa).

The segment at residues 45–218 is a DNA-binding region (T-box); the sequence is LEDAPLWQRF…YNPFAKAFLD (174 aa).

The protein resides in the nucleus. In terms of biological role, transcriptional regulator involved in developmental processes. Can activate POMC gene expression and repress the alpha glycoprotein subunit and thyroid-stimulating hormone beta promoters. This is T-box transcription factor TBX19 from Canis lupus familiaris (Dog).